The following is an 872-amino-acid chain: UPF0182 protein Noc_0961 (872 aa).

The next 7 helical transmembrane spans lie at 8–28 (FLIL…AGFE), 56–76 (LVVF…NFWV), 109–129 (SLWI…WPLF), 159–179 (LFSF…FLLL), 207–227 (WHLS…FFLQ), 254–274 (PFIW…LLFI), and 282–302 (TLAV…FHFL).

It belongs to the UPF0182 family.

It is found in the cell membrane. The sequence is that of UPF0182 protein Noc_0961 from Nitrosococcus oceani (strain ATCC 19707 / BCRC 17464 / JCM 30415 / NCIMB 11848 / C-107).